The primary structure comprises 36 residues: uncharacterized protein (36 aa).

This is an uncharacterized protein from Treponema pallidum (strain Nichols).